Consider the following 139-residue polypeptide: Maximins 4/H3 type 4 (139 aa).

Residues 1–18 (MNFKYIIAVSFLIASAYA) form the signal peptide. Positions 19–43 (RSVQNDEQSLSQRDVLEEESLREIR) are excised as a propeptide. N70 carries the asparagine amide modification. A propeptide spanning residues 74–118 (TAEEHEVMKRLEAVMRDLDSLDHPEEASERETRGFNQDEIAKEKR) is cleaved from the precursor. I138 is modified (isoleucine amide).

This sequence belongs to the bombinin family. As to expression, expressed by the skin glands.

It is found in the secreted. Maximin-4 shows antibacterial activity against both Gram-positive and Gram-negative bacteria. It also shows antimicrobial activity against the fungus C.albicans, but not against A.flavus nor P.uticale. It has little hemolytic activity. It does not possess a significant cytotoxicity against tumor cell lines. It does not possess a significant anti-HIV activity. Its function is as follows. Maximin-H3 shows antibacterial activity against both Gram-positive and Gram-negative bacteria. It also shows antimicrobial activity against the fungus C.albicans. Shows strong hemolytic activity. This is Maximins 4/H3 type 4 from Bombina maxima (Giant fire-bellied toad).